The sequence spans 390 residues: Chorismate synthase (390 aa).

Positions 48 and 54 each coordinate NADP(+). FMN is bound by residues 125–127, 238–239, Gly278, 293–297, and Arg319; these read RSS, NA, and KPTSS. Positions 359–390 are disordered; it reads PRIPGSTTNQIHPVEMQASAPRAEDPEPDESS.

The protein belongs to the chorismate synthase family. As to quaternary structure, homotetramer. It depends on FMNH2 as a cofactor.

The enzyme catalyses 5-O-(1-carboxyvinyl)-3-phosphoshikimate = chorismate + phosphate. The protein operates within metabolic intermediate biosynthesis; chorismate biosynthesis; chorismate from D-erythrose 4-phosphate and phosphoenolpyruvate: step 7/7. Its function is as follows. Catalyzes the anti-1,4-elimination of the C-3 phosphate and the C-6 proR hydrogen from 5-enolpyruvylshikimate-3-phosphate (EPSP) to yield chorismate, which is the branch point compound that serves as the starting substrate for the three terminal pathways of aromatic amino acid biosynthesis. This reaction introduces a second double bond into the aromatic ring system. The sequence is that of Chorismate synthase from Nitrosomonas europaea (strain ATCC 19718 / CIP 103999 / KCTC 2705 / NBRC 14298).